Consider the following 272-residue polypeptide: MTPTFAQAVTERTLSRRTRLCVGLDPRLGEYRDVAQLRQNTLDVLEASAPYAACVKPQLAFFEALGLPGFTLLEEVCAAARTLGLPVLLDGKRGDIGTTAAAYAQGWLGGTHAGDALTVNPFLGFQTLTPFVQAARENGGAIFVLVKTSNPDQQDLQGQGVSERIAVEIARLGDEEGLGDGDYASVGAVVGATHPGDLATFRALMPKALLLLPGLGAQGAQARDLAGAFHAGGTGALASASRAVQYARGLDVGAAREAALALRDELNGALGV.

Lys-92 serves as the catalytic Proton donor.

This sequence belongs to the OMP decarboxylase family. Type 2 subfamily.

It carries out the reaction orotidine 5'-phosphate + H(+) = UMP + CO2. It participates in pyrimidine metabolism; UMP biosynthesis via de novo pathway; UMP from orotate: step 2/2. The sequence is that of Orotidine 5'-phosphate decarboxylase (pyrF) from Deinococcus radiodurans (strain ATCC 13939 / DSM 20539 / JCM 16871 / CCUG 27074 / LMG 4051 / NBRC 15346 / NCIMB 9279 / VKM B-1422 / R1).